The sequence spans 795 residues: Lon protease (795 aa).

In terms of domain architecture, Lon N-terminal spans 11–203 (GRVIPVSDIV…KFIDYLLKQK (193 aa)). 356-363 (GPPGVGKT) contacts ATP. The Lon proteolytic domain maps to 593–771 (DNVPGVVTGL…EDVLRETLGI (179 aa)). Residues Ser677 and Lys720 contribute to the active site.

It belongs to the peptidase S16 family. As to quaternary structure, homohexamer. Organized in a ring with a central cavity.

Its subcellular location is the cytoplasm. The enzyme catalyses Hydrolysis of proteins in presence of ATP.. Its function is as follows. ATP-dependent serine protease that mediates the selective degradation of mutant and abnormal proteins as well as certain short-lived regulatory proteins. Required for cellular homeostasis and for survival from DNA damage and developmental changes induced by stress. Degrades polypeptides processively to yield small peptide fragments that are 5 to 10 amino acids long. Binds to DNA in a double-stranded, site-specific manner. In Clostridium beijerinckii (strain ATCC 51743 / NCIMB 8052) (Clostridium acetobutylicum), this protein is Lon protease.